The chain runs to 281 residues: Energy-coupling factor transporter ATP-binding protein EcfA1 (281 aa).

Residues Ile6–Asp245 form the ABC transporter domain. Gly44–Ser51 is an ATP binding site.

This sequence belongs to the ABC transporter superfamily. Energy-coupling factor EcfA family. Forms a stable energy-coupling factor (ECF) transporter complex composed of 2 membrane-embedded substrate-binding proteins (S component), 2 ATP-binding proteins (A component) and 2 transmembrane proteins (T component).

The protein localises to the cell membrane. ATP-binding (A) component of a common energy-coupling factor (ECF) ABC-transporter complex. Unlike classic ABC transporters this ECF transporter provides the energy necessary to transport a number of different substrates. The sequence is that of Energy-coupling factor transporter ATP-binding protein EcfA1 from Clostridium perfringens (strain ATCC 13124 / DSM 756 / JCM 1290 / NCIMB 6125 / NCTC 8237 / Type A).